The following is a 208-amino-acid chain: 3-demethoxyubiquinol 3-hydroxylase (208 aa).

Residues Glu57, Glu87, His90, Glu139, Glu171, and His174 each coordinate Fe cation.

This sequence belongs to the COQ7 family. It depends on Fe cation as a cofactor.

Its subcellular location is the cell membrane. The enzyme catalyses a 5-methoxy-2-methyl-3-(all-trans-polyprenyl)benzene-1,4-diol + AH2 + O2 = a 3-demethylubiquinol + A + H2O. The protein operates within cofactor biosynthesis; ubiquinone biosynthesis. Catalyzes the hydroxylation of 2-nonaprenyl-3-methyl-6-methoxy-1,4-benzoquinol during ubiquinone biosynthesis. This chain is 3-demethoxyubiquinol 3-hydroxylase, found in Burkholderia vietnamiensis (strain G4 / LMG 22486) (Burkholderia cepacia (strain R1808)).